The following is a 671-amino-acid chain: DNA ligase (671 aa).

NAD(+) contacts are provided by residues D32–D36, S81–L82, and E113. Residue K115 is the N6-AMP-lysine intermediate of the active site. The NAD(+) site is built by R136, E173, K290, and K314. Zn(2+) is bound by residues C408, C411, C426, and C432. A BRCT domain is found at E593 to S671.

This sequence belongs to the NAD-dependent DNA ligase family. LigA subfamily. The cofactor is Mg(2+). Mn(2+) serves as cofactor.

It carries out the reaction NAD(+) + (deoxyribonucleotide)n-3'-hydroxyl + 5'-phospho-(deoxyribonucleotide)m = (deoxyribonucleotide)n+m + AMP + beta-nicotinamide D-nucleotide.. Its function is as follows. DNA ligase that catalyzes the formation of phosphodiester linkages between 5'-phosphoryl and 3'-hydroxyl groups in double-stranded DNA using NAD as a coenzyme and as the energy source for the reaction. It is essential for DNA replication and repair of damaged DNA. The polypeptide is DNA ligase (Shigella sonnei (strain Ss046)).